The sequence spans 370 residues: 3-dehydroquinate synthase (370 aa).

Residues 108–112 (GVIGD), 132–133 (TT), K145, and K154 each bind NAD(+). Zn(2+) contacts are provided by E187, H249, and H267.

This sequence belongs to the sugar phosphate cyclases superfamily. Dehydroquinate synthase family. The cofactor is Co(2+). Zn(2+) is required as a cofactor. Requires NAD(+) as cofactor.

The protein localises to the cytoplasm. The catalysed reaction is 7-phospho-2-dehydro-3-deoxy-D-arabino-heptonate = 3-dehydroquinate + phosphate. The protein operates within metabolic intermediate biosynthesis; chorismate biosynthesis; chorismate from D-erythrose 4-phosphate and phosphoenolpyruvate: step 2/7. In terms of biological role, catalyzes the conversion of 3-deoxy-D-arabino-heptulosonate 7-phosphate (DAHP) to dehydroquinate (DHQ). This Cereibacter sphaeroides (strain KD131 / KCTC 12085) (Rhodobacter sphaeroides) protein is 3-dehydroquinate synthase.